The chain runs to 242 residues: Large ribosomal subunit protein uL1 (242 aa).

It belongs to the universal ribosomal protein uL1 family. Part of the 50S ribosomal subunit.

Functionally, binds directly to 23S rRNA. The L1 stalk is quite mobile in the ribosome, and is involved in E site tRNA release. Its function is as follows. Protein L1 is also a translational repressor protein, it controls the translation of the L11 operon by binding to its mRNA. The protein is Large ribosomal subunit protein uL1 of Kitasatospora aureofaciens (Streptomyces aureofaciens).